The primary structure comprises 315 residues: B3 domain-containing protein At1g05920 (315 aa).

The segment at 24-129 is disordered; it reads MISRDNQKKT…PQVASVPKSV (106 aa). 3 stretches are compositionally biased toward basic and acidic residues: residues 39–51, 66–83, and 100–114; these read VREE…EEMI, KEGK…DNRT, and FDHV…HAYL. The TF-B3 DNA-binding region spans 204–306; sequence INTVIQNDFL…ILCFALVPPT (103 aa).

Its subcellular location is the nucleus. This is B3 domain-containing protein At1g05920 from Arabidopsis thaliana (Mouse-ear cress).